We begin with the raw amino-acid sequence, 684 residues long: Histone-lysine N-methyltransferase SETMAR (684 aa).

A histone-lysine N-methyltransferase region spans residues 1 to 345; the sequence is MFAEAAKTTR…RLTLETMKMM (345 aa). One can recognise a Pre-SET domain in the interval 73 to 136; the sequence is PGCICVKTPC…HCRNRVVQKG (64 aa). The Zn(2+) site is built by C75, C77, C82, C87, C89, C118, C122, C124, and C128. The SET domain occupies 139–263; the sequence is FHFQVFKTHK…PEEELSYDYS (125 aa). Residues 149–151, Y192, R220, and 223–224 each bind S-adenosyl-L-methionine; these read KGW and NH. 4 residues coordinate Zn(2+): C226, C287, C289, and C294. Positions 283 to 299 constitute a Post-SET domain; it reads LRKPCYCGAKSCTAFLP. The tract at residues 346–684 is mariner transposase Hsmar1; sequence LDKKQIRAIF…CVDCNGSYFD (339 aa). 2 DNA-binding regions (H-T-H motif) span residues 364 to 395 and 428 to 448; these read KAAE…KFCK and TTRE…RHLK. Residue D496 participates in Mg(2+) binding. K498 is modified (N6-methyllysine). S508 carries the post-translational modification Phosphoserine; by CHEK1. Residue D588 participates in Mg(2+) binding.

In the N-terminal section; belongs to the class V-like SAM-binding methyltransferase superfamily. It in the C-terminal section; belongs to the mariner transposase family. In terms of assembly, homodimer. Interacts with PRPF19; required for SETMAR recruitment to damaged DNA sites. Interacts with PCNA. Interacts with TOP2A; stimulates TOP2A topoisomerase activity. May interact with RAD9A and/or RAD9B. Mg(2+) serves as cofactor. In terms of processing, methylated. Methylation regulates activity in DNA decatenation. Post-translationally, phosphorylated at Ser-508 by CHEK1 and dephosphorylated by protein phosphatase 2A/PP2A. Phosphorylation at Ser-508 is enhanced by DNA damage and promotes recruitment to damaged DNA. It stimulates DNA repair and impairs replication fork restart. Widely expressed, with highest expression in placenta and ovary and lowest expression in skeletal muscle.

It is found in the nucleus. Its subcellular location is the chromosome. It carries out the reaction L-lysyl(36)-[histone H3] + 2 S-adenosyl-L-methionine = N(6),N(6)-dimethyl-L-lysyl(36)-[histone H3] + 2 S-adenosyl-L-homocysteine + 2 H(+). In terms of biological role, protein derived from the fusion of a methylase with the transposase of an Hsmar1 transposon that plays a role in DNA double-strand break repair, stalled replication fork restart and DNA integration. DNA-binding protein, it is indirectly recruited to sites of DNA damage through protein-protein interactions. Also has kept a sequence-specific DNA-binding activity recognizing the 19-mer core of the 5'-terminal inverted repeats (TIRs) of the Hsmar1 element and displays a DNA nicking and end joining activity. In parallel, has a histone methyltransferase activity and methylates 'Lys-4' and 'Lys-36' of histone H3. Specifically mediates dimethylation of H3 'Lys-36' at sites of DNA double-strand break and may recruit proteins required for efficient DSB repair through non-homologous end-joining. Also regulates replication fork processing, promoting replication fork restart and regulating DNA decatenation through stimulation of the topoisomerase activity of TOP2A. In Homo sapiens (Human), this protein is Histone-lysine N-methyltransferase SETMAR.